The following is a 335-amino-acid chain: Nicotinate-nucleotide--dimethylbenzimidazole phosphoribosyltransferase (335 aa).

Residue glutamate 304 is the Proton acceptor of the active site.

The protein belongs to the CobT family.

It carries out the reaction 5,6-dimethylbenzimidazole + nicotinate beta-D-ribonucleotide = alpha-ribazole 5'-phosphate + nicotinate + H(+). It participates in nucleoside biosynthesis; alpha-ribazole biosynthesis; alpha-ribazole from 5,6-dimethylbenzimidazole: step 1/2. In terms of biological role, catalyzes the synthesis of alpha-ribazole-5'-phosphate from nicotinate mononucleotide (NAMN) and 5,6-dimethylbenzimidazole (DMB). The protein is Nicotinate-nucleotide--dimethylbenzimidazole phosphoribosyltransferase of Thermus thermophilus (strain ATCC 27634 / DSM 579 / HB8).